Here is a 299-residue protein sequence, read N- to C-terminus: GTPase Era (299 aa).

The Era-type G domain occupies 4–171 (KSGFVAILGR…VDILSENLEE (168 aa)). Residues 12 to 19 (GRPNVGKS) are G1. A GTP-binding site is contributed by 12-19 (GRPNVGKS). A G2 region spans residues 38–42 (QTTRN). The G3 stretch occupies residues 59–62 (DTPG). GTP contacts are provided by residues 59–63 (DTPGI) and 121–124 (NKID). The G4 stretch occupies residues 121–124 (NKID). The tract at residues 150 to 152 (ISA) is G5. The 79-residue stretch at 202-280 (TREEIPHSVA…FLETWVKVKK (79 aa)) folds into the KH type-2 domain.

The protein belongs to the TRAFAC class TrmE-Era-EngA-EngB-Septin-like GTPase superfamily. Era GTPase family. Monomer.

It localises to the cytoplasm. It is found in the cell membrane. Functionally, an essential GTPase that binds both GDP and GTP, with rapid nucleotide exchange. Plays a role in 16S rRNA processing and 30S ribosomal subunit biogenesis and possibly also in cell cycle regulation and energy metabolism. The chain is GTPase Era from Streptococcus gordonii (strain Challis / ATCC 35105 / BCRC 15272 / CH1 / DL1 / V288).